Consider the following 423-residue polypeptide: Transcription factor AP-2-epsilon (423 aa).

Residues 1 to 108 (MLVHSYSSME…EDAGLLSQPH (108 aa)) form a disordered region. Residues 14–27 (GLSSSSPGGRLSQL) are compositionally biased toward low complexity. The short motif at 50-55 (YFPPPY) is the PPxY motif element. Low complexity predominate over residues 57–70 (QSSLSYSQSQDGGY). Residues 79 to 93 (SLNSLHQHQQAAWHS) are compositionally biased toward polar residues. Residues 276-405 (RRKAANVTLL…YLLEALKLLD (130 aa)) form an H-S-H (helix-span-helix), dimerization region.

The protein belongs to the AP-2 family. As to quaternary structure, binds DNA as a dimer. Can form homodimers or heterodimers with other AP-2 family members.

The protein resides in the nucleus. In terms of biological role, sequence-specific DNA-binding protein that interacts with inducible viral and cellular enhancer elements to regulate transcription of selected genes. AP-2 factors bind to the consensus sequence 5'-GCCNNNGGC-3' and activate genes involved in a large spectrum of important biological functions. This Danio rerio (Zebrafish) protein is Transcription factor AP-2-epsilon.